Here is a 949-residue protein sequence, read N- to C-terminus: Valine--tRNA ligase (949 aa).

The 'HIGH' region motif lies at 45–55; the sequence is PNVTGVLHMGH. The 'KMSKS' region signature appears at 561–565; sequence KMSKS. Lys-564 serves as a coordination point for ATP. Residues 882 to 949 adopt a coiled-coil conformation; sequence EELLKQEKTR…EIKEKLMTLP (68 aa).

Belongs to the class-I aminoacyl-tRNA synthetase family. ValS type 1 subfamily. In terms of assembly, monomer.

It localises to the cytoplasm. The enzyme catalyses tRNA(Val) + L-valine + ATP = L-valyl-tRNA(Val) + AMP + diphosphate. Its function is as follows. Catalyzes the attachment of valine to tRNA(Val). As ValRS can inadvertently accommodate and process structurally similar amino acids such as threonine, to avoid such errors, it has a 'posttransfer' editing activity that hydrolyzes mischarged Thr-tRNA(Val) in a tRNA-dependent manner. The chain is Valine--tRNA ligase from Protochlamydia amoebophila (strain UWE25).